The primary structure comprises 808 residues: Quinoprotein glucose dehydrogenase (808 aa).

The first 33 residues, 1–33 (MSTTSRPGLWALITAAVFALCGAILTVGGAWVA), serve as a signal peptide directing secretion. Transmembrane regions (helical) follow at residues 35 to 54 (IGGPLYYVILGLALLATAFL), 59 to 76 (NPAALYLFAVVVFGTVIW), 94 to 108 (IVIILGIWLLLPFVS), and 123 to 138 (GAVGVAVLALFASLFT). The Proton acceptor role is filled by Asp-470. A disordered region spans residues 514-545 (VPAPETPVPQGAAPGDHTSPTQPMSQLTLRPK). Residues 531 to 541 (TSPTQPMSQLT) are compositionally biased toward polar residues.

The protein belongs to the bacterial PQQ dehydrogenase family. Pyrroloquinoline quinone is required as a cofactor.

It is found in the cell inner membrane. It catalyses the reaction a ubiquinone + D-glucose = D-glucono-1,5-lactone + a ubiquinol. The sequence is that of Quinoprotein glucose dehydrogenase (gdh) from Gluconobacter oxydans (strain 621H) (Gluconobacter suboxydans).